Reading from the N-terminus, the 289-residue chain is Acetyl-coenzyme A carboxylase carboxyl transferase subunit beta (289 aa).

A CoA carboxyltransferase N-terminal domain is found at 24-289; it reads LWTNCESCGQ…RQKTVSDAAA (266 aa). Residues cysteine 28, cysteine 31, cysteine 47, and cysteine 50 each coordinate Zn(2+). A C4-type zinc finger spans residues 28–50; it reads CESCGQMMLTKELERSEKVCPHC.

This sequence belongs to the AccD/PCCB family. As to quaternary structure, acetyl-CoA carboxylase is a heterohexamer composed of biotin carboxyl carrier protein (AccB), biotin carboxylase (AccC) and two subunits each of ACCase subunit alpha (AccA) and ACCase subunit beta (AccD). The cofactor is Zn(2+).

Its subcellular location is the cytoplasm. It carries out the reaction N(6)-carboxybiotinyl-L-lysyl-[protein] + acetyl-CoA = N(6)-biotinyl-L-lysyl-[protein] + malonyl-CoA. It participates in lipid metabolism; malonyl-CoA biosynthesis; malonyl-CoA from acetyl-CoA: step 1/1. Functionally, component of the acetyl coenzyme A carboxylase (ACC) complex. Biotin carboxylase (BC) catalyzes the carboxylation of biotin on its carrier protein (BCCP) and then the CO(2) group is transferred by the transcarboxylase to acetyl-CoA to form malonyl-CoA. This chain is Acetyl-coenzyme A carboxylase carboxyl transferase subunit beta, found in Gluconobacter oxydans (strain 621H) (Gluconobacter suboxydans).